The sequence spans 261 residues: Receptor expression-enhancing protein 4 (261 aa).

2 helical membrane-spanning segments follow: residues 1 to 21 and 35 to 55; these read MVSW…YPAY and YVRW…ETFT. The tract at residues 177–261 is disordered; that stretch reads ELHRRPIGYP…KKPAQSEPEN (85 aa). A compositionally biased stretch (basic and acidic residues) spans 191–202; sequence ADSDSMDERWSD.

It belongs to the DP1 family. In terms of assembly, interacts with microtubules. During gastrulation, expressed on the dorsal side of the embryo and then in the neural plate and neural tube. At tailbud stages, expressed in the somites. Expressed in the neural tube later in development.

It is found in the endoplasmic reticulum membrane. Microtubule-binding protein required to ensure proper cell division and nuclear envelope reassembly by sequestering the endoplasmic reticulum away from chromosomes during mitosis. Probably acts by clearing the endoplasmic reticulum membrane from metaphase chromosomes. May play a role in the maintenance of both the nervous system and the musculature. The chain is Receptor expression-enhancing protein 4 (reep4) from Xenopus tropicalis (Western clawed frog).